The primary structure comprises 2542 residues: Probable polyketide synthase 41 (2542 aa).

The 431-residue stretch at 11 to 441 (CNKVAIIGIG…GSNCCLIVSS (431 aa)) folds into the Ketosynthase family 3 (KS3) domain. Active-site for beta-ketoacyl synthase activity residues include Cys-177, His-318, and His-360. The segment at 628–661 (GIKPSIIVGHSLGEISSSYCSGMIDLDTFCYLIY) is acyl/malonyl transferase. The active-site For acyl/malonyl transferase activity is the Ser-638. The interval 926–1059 (INHLGISNSN…ANFQLFSRGP (134 aa)) is N-terminal hotdog fold. Residues 926–1231 (INHLGISNSN…FKSTTKIKDP (306 aa)) form the PKS/mFAS DH domain. Catalysis depends on His-959, which acts as the Proton acceptor; for dehydratase activity. Residues 1083-1231 (NLTKLSKQEL…FKSTTKIKDP (149 aa)) form a C-terminal hotdog fold region. Asp-1145 acts as the Proton donor; for dehydratase activity in catalysis. The 79-residue stretch at 2459–2537 (NVELTVDQLI…SFIQLVKNSM (79 aa)) folds into the Carrier domain. Ser-2496 carries the post-translational modification O-(pantetheine 4'-phosphoryl)serine.

Requires pantetheine 4'-phosphate as cofactor.

Functionally, probable polyketide synthase. This Dictyostelium discoideum (Social amoeba) protein is Probable polyketide synthase 41 (pks41).